A 158-amino-acid chain; its full sequence is C-type lectin galactose-binding isoform (158 aa).

Residues 1–23 (MGRFLLVTLSLLVVAFSLNGANS) form the signal peptide. Intrachain disulfides connect Cys-26–Cys-37, Cys-54–Cys-154, and Cys-129–Cys-146. The region spanning 33–155 (RNGFCYKVFN…CTALRPFLCQ (123 aa)) is the C-type lectin domain. The Ca(2+) site is built by Gln-119, Asp-121, and Glu-127. Positions 119–121 (QPD) match the Galactose-binding motif. Asn-134 is a glycosylation site (N-linked (GlcNAc...) asparagine). Positions 142 and 143 each coordinate Ca(2+).

Belongs to the true venom lectin family. In terms of assembly, homodimer; disulfide-linked. In terms of tissue distribution, expressed by the venom gland.

It localises to the secreted. Functionally, galactose-binding lectin that binds to and agglutinates erythrocytes in a calcium-dependent manner. In Pseudechis porphyriacus (Red-bellied black snake), this protein is C-type lectin galactose-binding isoform.